The sequence spans 314 residues: Type II methyltransferase M.HpaI (314 aa).

This sequence belongs to the N(4)/N(6)-methyltransferase family.

It carries out the reaction a 2'-deoxyadenosine in DNA + S-adenosyl-L-methionine = an N(6)-methyl-2'-deoxyadenosine in DNA + S-adenosyl-L-homocysteine + H(+). Functionally, a beta subtype methylase that recognizes the double-stranded sequence 5'-GTTAAC-3', methylates A-5 on both strands, and protects the DNA from cleavage by the HpaI endonuclease. In Haemophilus parainfluenzae, this protein is Type II methyltransferase M.HpaI (hpaIM).